A 726-amino-acid chain; its full sequence is Peroxisomal fatty acid beta-oxidation multifunctional protein (726 aa).

In the N-terminal section; belongs to the enoyl-CoA hydratase/isomerase family. The protein in the central section; belongs to the 3-hydroxyacyl-CoA dehydrogenase family. Monomer.

Its subcellular location is the peroxisome. The protein localises to the cytoplasm. The protein resides in the cytoskeleton. It carries out the reaction a (3S)-3-hydroxyacyl-CoA = a (2E)-enoyl-CoA + H2O. The catalysed reaction is a 4-saturated-(3S)-3-hydroxyacyl-CoA = a (3E)-enoyl-CoA + H2O. It catalyses the reaction a (3Z)-enoyl-CoA = a 4-saturated (2E)-enoyl-CoA. The enzyme catalyses a (3E)-enoyl-CoA = a 4-saturated (2E)-enoyl-CoA. It carries out the reaction (3S)-3-hydroxybutanoyl-CoA = (3R)-3-hydroxybutanoyl-CoA. The catalysed reaction is a (3S)-3-hydroxyacyl-CoA + NAD(+) = a 3-oxoacyl-CoA + NADH + H(+). Its pathway is lipid metabolism; fatty acid beta-oxidation. Functionally, multifunctional enzyme involved in fatty acid beta-oxidation. Also binds to RNA and microtubules. Possible role in subcellular mRNA localization and RNA-cytoskeleton interactions. This Oryza sativa subsp. japonica (Rice) protein is Peroxisomal fatty acid beta-oxidation multifunctional protein (MFP).